Consider the following 80-residue polypeptide: Acyl carrier protein (80 aa).

Positions 4–79 (EAILEKVRSI…DAVKYIEDKQ (76 aa)) constitute a Carrier domain. Serine 39 carries the O-(pantetheine 4'-phosphoryl)serine modification.

This sequence belongs to the acyl carrier protein (ACP) family. In terms of processing, 4'-phosphopantetheine is transferred from CoA to a specific serine of apo-ACP by AcpS. This modification is essential for activity because fatty acids are bound in thioester linkage to the sulfhydryl of the prosthetic group.

It localises to the cytoplasm. It participates in lipid metabolism; fatty acid biosynthesis. Carrier of the growing fatty acid chain in fatty acid biosynthesis. The sequence is that of Acyl carrier protein from Synechococcus sp. (strain CC9902).